A 676-amino-acid chain; its full sequence is Protein TAPT1 homolog (676 aa).

Positions 1-44 are disordered; it reads MNATLNSAGGKRQLRFRGDVTGSRVEELHHQQQEEQKQKAPLAQ. Residues 24 to 38 show a composition bias toward basic and acidic residues; that stretch reads RVEELHHQQQEEQKQ. A run of 6 helical transmembrane segments spans residues 128–148, 170–190, 249–269, 346–366, 414–434, and 437–457; these read SFLY…WALV, EICD…MLLV, VLTH…LIMF, FCVM…IDWV, GFIP…AVSF, and LAAW…RICL. Residues 625 to 676 are disordered; that stretch reads SGDGVTSAKAKKATQRLPKRTHKRSESEPGMPSMVEKGGAAGIAGGNQTTQL. Positions 633–647 are enriched in basic residues; sequence KAKKATQRLPKRTHK.

It belongs to the TAPT1 family.

The protein resides in the membrane. The chain is Protein TAPT1 homolog from Drosophila melanogaster (Fruit fly).